The primary structure comprises 210 residues: Hypoxanthine-guanine phosphoribosyltransferase (210 aa).

GMP contacts are provided by residues K54, 113 to 121, K145, and D173; that span reads EDILDTALT. D117 serves as the catalytic Proton acceptor. Residue D173 coordinates Mg(2+).

It belongs to the purine/pyrimidine phosphoribosyltransferase family. Mg(2+) serves as cofactor.

The protein resides in the cytoplasm. The enzyme catalyses IMP + diphosphate = hypoxanthine + 5-phospho-alpha-D-ribose 1-diphosphate. It catalyses the reaction GMP + diphosphate = guanine + 5-phospho-alpha-D-ribose 1-diphosphate. The protein operates within purine metabolism; IMP biosynthesis via salvage pathway; IMP from hypoxanthine: step 1/1. In terms of biological role, converts guanine to guanosine monophosphate, and hypoxanthine to inosine monophosphate. Transfers the 5-phosphoribosyl group from 5-phosphoribosylpyrophosphate onto the purine. Plays a central role in the generation of purine nucleotides through the purine salvage pathway. The protein is Hypoxanthine-guanine phosphoribosyltransferase (HGPRT) of Trypanosoma brucei brucei.